Reading from the N-terminus, the 473-residue chain is Aspartyl/glutamyl-tRNA(Asn/Gln) amidotransferase subunit B (473 aa).

The protein belongs to the GatB/GatE family. GatB subfamily. As to quaternary structure, heterotrimer of A, B and C subunits.

The enzyme catalyses L-glutamyl-tRNA(Gln) + L-glutamine + ATP + H2O = L-glutaminyl-tRNA(Gln) + L-glutamate + ADP + phosphate + H(+). It carries out the reaction L-aspartyl-tRNA(Asn) + L-glutamine + ATP + H2O = L-asparaginyl-tRNA(Asn) + L-glutamate + ADP + phosphate + 2 H(+). Its function is as follows. Allows the formation of correctly charged Asn-tRNA(Asn) or Gln-tRNA(Gln) through the transamidation of misacylated Asp-tRNA(Asn) or Glu-tRNA(Gln) in organisms which lack either or both of asparaginyl-tRNA or glutaminyl-tRNA synthetases. The reaction takes place in the presence of glutamine and ATP through an activated phospho-Asp-tRNA(Asn) or phospho-Glu-tRNA(Gln). The protein is Aspartyl/glutamyl-tRNA(Asn/Gln) amidotransferase subunit B of Methanococcoides burtonii (strain DSM 6242 / NBRC 107633 / OCM 468 / ACE-M).